We begin with the raw amino-acid sequence, 572 residues long: Sulfite reductase [NADPH] hemoprotein beta-component (572 aa).

4 residues coordinate [4Fe-4S] cluster: C437, C443, C482, and C486. C486 serves as a coordination point for siroheme.

The protein belongs to the nitrite and sulfite reductase 4Fe-4S domain family. In terms of assembly, alpha(8)-beta(8). The alpha component is a flavoprotein, the beta component is a hemoprotein. Requires siroheme as cofactor. It depends on [4Fe-4S] cluster as a cofactor.

It carries out the reaction hydrogen sulfide + 3 NADP(+) + 3 H2O = sulfite + 3 NADPH + 4 H(+). The protein operates within sulfur metabolism; hydrogen sulfide biosynthesis; hydrogen sulfide from sulfite (NADPH route): step 1/1. Its function is as follows. Component of the sulfite reductase complex that catalyzes the 6-electron reduction of sulfite to sulfide. This is one of several activities required for the biosynthesis of L-cysteine from sulfate. This is Sulfite reductase [NADPH] hemoprotein beta-component from Staphylococcus epidermidis (strain ATCC 35984 / DSM 28319 / BCRC 17069 / CCUG 31568 / BM 3577 / RP62A).